The sequence spans 20 residues: Thylakoid lumenal 22 kDa protein (20 aa).

The protein localises to the plastid. It localises to the chloroplast thylakoid lumen. The chain is Thylakoid lumenal 22 kDa protein from Spinacia oleracea (Spinach).